The primary structure comprises 559 residues: Protein QNR-71 (559 aa).

Residues 1–22 (MSQAHRHLALLLPAEAVLCAAA) form the signal peptide. Over 23 to 487 (MRFQDVLSNG…NGGSSSGTTK (465 aa)) the chain is Extracellular. N-linked (GlcNAc...) asparagine glycosylation is found at asparagine 92, asparagine 133, asparagine 145, asparagine 149, asparagine 192, asparagine 199, asparagine 248, asparagine 274, asparagine 307, and asparagine 311. Residues 239–326 (VSMSQKHDRN…IIPVPCKPVT (88 aa)) enclose the PKD domain. The segment at 329–356 (PSLPTPAVTTDASSNSDPSAPNEMAEDN) is disordered. The span at 335–347 (AVTTDASSNSDPS) shows a compositional bias: polar residues. N-linked (GlcNAc...) asparagine glycosylation is present at asparagine 459. A helical membrane pass occupies residues 488–508 (GVFIFLGLLAVFGAIGAFVLY). At 509–559 (KRYKQYKPIERSAGQAENQEGLSAYVSNFKAFFFPKSTERNPLLKSKPGIV) the chain is on the cytoplasmic side.

This sequence belongs to the PMEL/NMB family. In terms of tissue distribution, melanocyte-specific, restricted to the pigmented layer of the retina and the epidermis.

It is found in the membrane. Could be involved in melanogenesis. This chain is Protein QNR-71 (QNR-71), found in Coturnix japonica (Japanese quail).